We begin with the raw amino-acid sequence, 238 residues long: tRNA1(Val) (adenine(37)-N6)-methyltransferase (238 aa).

This sequence belongs to the methyltransferase superfamily. tRNA (adenine-N(6)-)-methyltransferase family.

It localises to the cytoplasm. The catalysed reaction is adenosine(37) in tRNA1(Val) + S-adenosyl-L-methionine = N(6)-methyladenosine(37) in tRNA1(Val) + S-adenosyl-L-homocysteine + H(+). Functionally, specifically methylates the adenine in position 37 of tRNA(1)(Val) (anticodon cmo5UAC). The chain is tRNA1(Val) (adenine(37)-N6)-methyltransferase from Shewanella putrefaciens (strain CN-32 / ATCC BAA-453).